We begin with the raw amino-acid sequence, 175 residues long: Adenylate kinase isoenzyme 6 homolog (175 aa).

5 residues coordinate ATP: G18, G20, K21, T22, and T23. The NMPbind stretch occupies residues 38-61 (CIGDVVKENHLHFGFDEKWKTYDV). The tract at residues 113–123 (SRGYSLEKIQE) is LID. R114 is an ATP binding site.

The protein belongs to the adenylate kinase family. AK6 subfamily. In terms of assembly, interacts with small ribosomal subunit protein uS11. Not a structural component of 43S pre-ribosomes, but transiently interacts with them by binding to uS11.

The protein resides in the cytoplasm. It is found in the nucleus. It catalyses the reaction AMP + ATP = 2 ADP. The enzyme catalyses ATP + H2O = ADP + phosphate + H(+). In terms of biological role, broad-specificity nucleoside monophosphate (NMP) kinase that catalyzes the reversible transfer of the terminal phosphate group between nucleoside triphosphates and monophosphates. Also has ATPase activity. Involved in the late cytoplasmic maturation steps of the 40S ribosomal particles, specifically 18S rRNA maturation. While NMP activity is not required for ribosome maturation, ATPase activity is. Associates transiently with small ribosomal subunit protein uS11. ATP hydrolysis breaks the interaction with uS11. May temporarily remove uS11 from the ribosome to enable a conformational change of the ribosomal RNA that is needed for the final maturation step of the small ribosomal subunit. Its NMP activity may have a role in nuclear energy homeostasis. This chain is Adenylate kinase isoenzyme 6 homolog (fap7), found in Schizosaccharomyces pombe (strain 972 / ATCC 24843) (Fission yeast).